Reading from the N-terminus, the 299-residue chain is Recombination-associated protein RdgC (299 aa).

It belongs to the RdgC family.

It is found in the cytoplasm. It localises to the nucleoid. May be involved in recombination. The chain is Recombination-associated protein RdgC from Neisseria meningitidis serogroup B (strain ATCC BAA-335 / MC58).